The primary structure comprises 201 residues: Large ribosomal subunit protein uL18 (201 aa).

This sequence belongs to the universal ribosomal protein uL18 family. Part of the 50S ribosomal subunit. Contacts the 5S and 23S rRNAs.

Its function is as follows. This is one of the proteins that bind and probably mediate the attachment of the 5S RNA into the large ribosomal subunit, where it forms part of the central protuberance. This chain is Large ribosomal subunit protein uL18, found in Thermococcus gammatolerans (strain DSM 15229 / JCM 11827 / EJ3).